Consider the following 303-residue polypeptide: Recombination-associated protein RdgC (303 aa).

It belongs to the RdgC family.

Its subcellular location is the cytoplasm. It is found in the nucleoid. In terms of biological role, may be involved in recombination. This is Recombination-associated protein RdgC from Edwardsiella ictaluri (strain 93-146).